The following is a 179-amino-acid chain: Large ribosomal subunit protein uL6 (179 aa).

It belongs to the universal ribosomal protein uL6 family. As to quaternary structure, part of the 50S ribosomal subunit.

Its function is as follows. This protein binds to the 23S rRNA, and is important in its secondary structure. It is located near the subunit interface in the base of the L7/L12 stalk, and near the tRNA binding site of the peptidyltransferase center. The protein is Large ribosomal subunit protein uL6 of Synechococcus sp. (strain CC9311).